Consider the following 325-residue polypeptide: Phospholipid phosphatase-related protein type 1 (325 aa).

Asn5 carries an N-linked (GlcNAc...) asparagine glycan. 3 helical membrane passes run 13 to 33, 67 to 87, and 127 to 147; these read IIPC…LLAY, FISP…IIFI, and FIGV…AGQV. The N-linked (GlcNAc...) asparagine glycan is linked to Asn163. A run of 3 helical transmembrane segments spans residues 201 to 219, 226 to 244, and 257 to 277; these read AALS…TSTI, LAKP…LTGL, and VIAG…CVVH. The residue at position 307 (Ser307) is a Phosphoserine. The N-linked (GlcNAc...) asparagine glycan is linked to Asn316.

This sequence belongs to the PA-phosphatase related phosphoesterase family. In terms of tissue distribution, highly expressed in the brain. Also found in the liver, kidney and testis. In the brain shows a strongest expression in the hippocampus and cerebellum.

Its subcellular location is the cell membrane. The protein resides in the cell projection. It is found in the neuron projection. In terms of biological role, may play a role in neurite outgrowth and neurogenesis. The polypeptide is Phospholipid phosphatase-related protein type 1 (Rattus norvegicus (Rat)).